A 620-amino-acid chain; its full sequence is Glutathione-regulated potassium-efflux system protein KefC (620 aa).

12 consecutive transmembrane segments (helical) span residues His4–Val24, Leu26–Leu46, Ser54–Leu74, Gly90–Leu110, Val114–Met134, Phe149–Leu169, Met178–Leu198, Val218–Gly238, Gly270–Leu290, Leu294–Ile314, Trp327–Gln347, and Ser359–Asn379. Positions Gln399 to Thr518 constitute an RCK N-terminal domain. The interval Gly597–Ser620 is disordered.

This sequence belongs to the monovalent cation:proton antiporter 2 (CPA2) transporter (TC 2.A.37) family. KefC subfamily. As to quaternary structure, homodimer. Interacts with the regulatory subunit KefF.

The protein localises to the cell inner membrane. Pore-forming subunit of a potassium efflux system that confers protection against electrophiles. Catalyzes K(+)/H(+) antiport. The chain is Glutathione-regulated potassium-efflux system protein KefC from Shigella sonnei (strain Ss046).